Here is a 935-residue protein sequence, read N- to C-terminus: Progesterone receptor (935 aa).

A disordered region spans residues 1–50 (MTELKAKGPRAPHVAGSPSSPKVGSPLPCSQAAGPFPGSQTSDTLPEASA). Positions 1 to 164 (MTELKAKGPR…PATQRVLSPL (164 aa)) are AF3; mediates transcriptional activation. The segment at 1–568 (MTELKAKGPR…YSFESLPQKI (568 aa)) is modulating, Pro-Rich. At S20 the chain carries Phosphoserine. The LXXL motif 1 motif lies at 55–59 (LDGLL). Residues 62–159 (RICQGQDPTD…DPPAAPATQR (98 aa)) are disordered. Phosphoserine is present on S81. Positions 115-119 (LDTLW) match the LXXL motif 2 motif. S130 and S162 each carry phosphoserine. The mediates transcriptional transrepression stretch occupies residues 165–305 (MSRSGGKAGD…LATTVTDFIH (141 aa)). Positions 183-187 (KVLPR) match the Nuclear localization signal motif. A disordered region spans residues 185–252 (LPRGLSPSRQ…ALGGAAAGGG (68 aa)). At S190 the chain carries Phosphoserine. Over residues 191-203 (PSRQLLLPTSGSP) the composition is skewed to polar residues. The residue at position 213 (S213) is a Phosphoserine. The segment covering 220 to 231 (EVEEEDGSESED) has biased composition (acidic residues). Residues 232–246 (SAGPLLKGKPRALGG) show a composition bias toward low complexity. S294 carries the phosphoserine; by MAPK1 modification. Residues 331-365 (GGAGAASAFAPPRSSPSASSTPVPGGDFPDCAYAP) form a disordered region. Positions 335 to 356 (AASAFAPPRSSPSASSTPVPGG) are enriched in low complexity. S345 bears the Phosphoserine; by MAPK mark. K388 participates in a covalent cross-link: Glycyl lysine isopeptide (Lys-Gly) (interchain with G-Cter in SUMO); alternate. K388 participates in a covalent cross-link: Glycyl lysine isopeptide (Lys-Gly) (interchain with G-Cter in ubiquitin); alternate. Residue S400 is modified to Phosphoserine; by CDK2. The disordered stretch occupies residues 415–452 (PDFPLGPPPSLPPRAPPPRPGEAAVTAAPASASVSSAS). Residues 418 to 434 (PLGPPPSLPPRAPPPRP) show a composition bias toward pro residues. Residues 435–452 (GEAAVTAAPASASVSSAS) are compositionally biased toward low complexity. The tract at residues 456-548 (STLECILYKA…VYPPYLNYLR (93 aa)) is AF1; mediates transcriptional activation. Residue K533 forms a Glycyl lysine isopeptide (Lys-Gly) (interchain with G-Cter in SUMO) linkage. NR C4-type zinc fingers lie at residues 569 to 589 (CLICGDEASGCHYGVLTCGSC) and 605 to 629 (CAGRNDCIVDKIRRKNCPACRLRKC). A DNA-binding region (nuclear receptor) is located at residues 569–641 (CLICGDEASG…AGMVLGGRKF (73 aa)). The residue at position 678 (S678) is a Phosphoserine. Residues 681–915 (QDIQLIPPLI…EFPEMMSEVI (235 aa)) form the NR LBD domain. The interval 689–935 (LINLLLSIEP…MVKPLLFHKK (247 aa)) is AF2; mediates transcriptional activation.

Belongs to the nuclear hormone receptor family. As to quaternary structure, interacts with SMARD1 and UNC45A. Interacts with CUEDC2; the interaction promotes ubiquitination, decreases sumoylation, and represses transcriptional activity. Interacts with PIAS3; the interaction promotes sumoylation of PR in a hormone-dependent manner, inhibits DNA-binding, and alters nuclear export. Interacts with SP1; the interaction requires ligand-induced phosphorylation on Ser-344 by ERK1/2-MAPK. Interacts with PRMT2. Interacts with NCOA2 and NCOA1. Interacts with KLF9. Interacts with GTF2B. In terms of processing, phosphorylated on multiple serine sites. Several of these sites are hormone-dependent. Phosphorylation on Ser-294 is highly hormone-dependent and modulates ubiquitination and sumoylation on Lys-388. Phosphorylation on Ser-345 requires induction by hormone. Basal phosphorylation on Ser-81, Ser-162, Ser-190 and Ser-400 is increased in response to progesterone and can be phosphorylated in vitro by the CDK2-A1 complex. Increased levels of phosphorylation on Ser-400 also in the presence of EGF, heregulin, IGF, PMA and FBS. Phosphorylation at this site by CDK2 is ligand-independent, and increases nuclear translocation and transcriptional activity. Phosphorylation at Ser-162 and Ser-294, but not at Ser-190, is impaired during the G(2)/M phase of the cell cycle. Phosphorylation on Ser-345 by ERK1/2 MAPK is required for interaction with SP1. Sumoylation is hormone-dependent and represses transcriptional activity. Sumoylation on all three sites is enhanced by PIAS3. Desumoylated by SENP1. Sumoylation on Lys-388, the main site of sumoylation, is repressed by ubiquitination on the same site, and modulated by phosphorylation at Ser-294. Post-translationally, ubiquitination is hormone-dependent and represses sumoylation on the same site. Promoted by MAPK-mediated phosphorylation on Ser-294. In terms of processing, palmitoylated by ZDHHC7 and ZDHHC21. Palmitoylation is required for plasma membrane targeting and for rapid intracellular signaling via ERK and AKT kinases and cAMP generation.

It is found in the nucleus. The protein localises to the cytoplasm. Functionally, the steroid hormones and their receptors are involved in the regulation of eukaryotic gene expression and affect cellular proliferation and differentiation in target tissues. Transcriptional activator of several progesteron-dependent promoters in a variety of cell types. Involved in activation of SRC-dependent MAPK signaling on hormone stimulation. This chain is Progesterone receptor (PGR), found in Pithecia irrorata (Gray monk saki).